The primary structure comprises 264 residues: ATP synthase subunit a (264 aa).

5 consecutive transmembrane segments (helical) span residues 39–59 (LDTL…FYII), 97–117 (VAPL…MDLV), 139–159 (TADP…VVFY), 205–225 (LFGN…LPWW), and 239–259 (LLVI…YISL).

It belongs to the ATPase A chain family. In terms of assembly, F-type ATPases have 2 components, CF(1) - the catalytic core - and CF(0) - the membrane proton channel. CF(1) has five subunits: alpha(3), beta(3), gamma(1), delta(1), epsilon(1). CF(0) has three main subunits: a(1), b(2) and c(9-12). The alpha and beta chains form an alternating ring which encloses part of the gamma chain. CF(1) is attached to CF(0) by a central stalk formed by the gamma and epsilon chains, while a peripheral stalk is formed by the delta and b chains.

The protein resides in the cell inner membrane. Its function is as follows. Key component of the proton channel; it plays a direct role in the translocation of protons across the membrane. This Coxiella burnetii (strain CbuG_Q212) (Coxiella burnetii (strain Q212)) protein is ATP synthase subunit a.